The sequence spans 139 residues: Thioredoxin H-type (139 aa).

Residues 20–132 (ELAGGNVHLI…LHKKITAILD (113 aa)) form the Thioredoxin domain. Catalysis depends on nucleophile residues Cys-58 and Cys-61. Cys-58 and Cys-61 form a disulfide bridge.

The protein resides in the cytoplasm. Its function is as follows. Participates in various redox reactions through the reversible oxidation of the active center dithiol to a disulfide. The H form is known to activate a number of cytosolic enzymes. This chain is Thioredoxin H-type, found in Populus jackii (Balm of Gilead).